The primary structure comprises 138 residues: Protein X (138 aa).

The tract at residues 20 to 43 (PLRGQPSGPSVSGTSAGSPSSAAS) is disordered. Residues 25 to 43 (PSGPSVSGTSAGSPSSAAS) show a composition bias toward low complexity. The interval 68 to 113 (PCCLGFTCADLRTMDSTVNFVPWHAKRQLGMMQKDFWTAYIRDQLL) is mitochondrial targeting sequence.

This sequence belongs to the orthohepadnavirus protein X family. May form homodimer. May interact with host CEBPA, CFLAR, CREB1, DDB1, E4F1, HBXIP, HSPD1/HSP60, NFKBIA, POLR2E and SMAD4. Interacts with host SMC5-SMC6 complex and induces its degradation. Interacts with host TRPC4AP; leading to prevent ubiquitination of TRPC4AP. Interacts with host PLSCR1; this interaction promotes ubiquitination and degradation of HBx and impairs HBx-mediated cell proliferation. In terms of processing, a fraction may be phosphorylated in insect cells and HepG2 cells, a human hepatoblastoma cell line. Phosphorylated in vitro by host protein kinase C or mitogen-activated protein kinase. N-acetylated in insect cells.

The protein localises to the host cytoplasm. Its subcellular location is the host nucleus. It localises to the host mitochondrion. In terms of biological role, multifunctional protein that plays a role in silencing host antiviral defenses and promoting viral transcription. Does not seem to be essential for HBV infection. May be directly involved in development of cirrhosis and liver cancer (hepatocellular carcinoma). Most of cytosolic activities involve modulation of cytosolic calcium. The effect on apoptosis is controversial depending on the cell types in which the studies have been conducted. May induce apoptosis by localizing in mitochondria and causing loss of mitochondrial membrane potential. May also modulate apoptosis by binding host CFLAR, a key regulator of the death-inducing signaling complex (DISC). Promotes viral transcription by using the host E3 ubiquitin ligase DDB1 to target the SMC5-SMC6 complex to proteasomal degradation. This host complex would otherwise bind to viral episomal DNA, and prevents its transcription. Moderately stimulates transcription of many different viral and cellular transcription elements. Promoters and enhancers stimulated by HBx contain DNA binding sites for NF-kappa-B, AP-1, AP-2, c-EBP, ATF/CREB, or the calcium-activated factor NF-AT. The protein is Protein X of Ground squirrel hepatitis virus (strain 27) (GSHV).